Here is a 280-residue protein sequence, read N- to C-terminus: Putative pyruvate, phosphate dikinase regulatory protein (280 aa).

154–161 lines the ADP pocket; sequence GVSRTSKT.

This sequence belongs to the pyruvate, phosphate/water dikinase regulatory protein family. PDRP subfamily.

The enzyme catalyses N(tele)-phospho-L-histidyl/L-threonyl-[pyruvate, phosphate dikinase] + ADP = N(tele)-phospho-L-histidyl/O-phospho-L-threonyl-[pyruvate, phosphate dikinase] + AMP + H(+). The catalysed reaction is N(tele)-phospho-L-histidyl/O-phospho-L-threonyl-[pyruvate, phosphate dikinase] + phosphate + H(+) = N(tele)-phospho-L-histidyl/L-threonyl-[pyruvate, phosphate dikinase] + diphosphate. In terms of biological role, bifunctional serine/threonine kinase and phosphorylase involved in the regulation of the pyruvate, phosphate dikinase (PPDK) by catalyzing its phosphorylation/dephosphorylation. The polypeptide is Putative pyruvate, phosphate dikinase regulatory protein (Nitrobacter winogradskyi (strain ATCC 25391 / DSM 10237 / CIP 104748 / NCIMB 11846 / Nb-255)).